The sequence spans 365 residues: Methylthioribose-1-phosphate isomerase (365 aa).

Asp-255 functions as the Proton donor in the catalytic mechanism.

This sequence belongs to the eIF-2B alpha/beta/delta subunits family. MtnA subfamily.

The protein localises to the cytoplasm. It localises to the nucleus. It carries out the reaction 5-(methylsulfanyl)-alpha-D-ribose 1-phosphate = 5-(methylsulfanyl)-D-ribulose 1-phosphate. The protein operates within amino-acid biosynthesis; L-methionine biosynthesis via salvage pathway; L-methionine from S-methyl-5-thio-alpha-D-ribose 1-phosphate: step 1/6. Functionally, catalyzes the interconversion of methylthioribose-1-phosphate (MTR-1-P) into methylthioribulose-1-phosphate (MTRu-1-P). This chain is Methylthioribose-1-phosphate isomerase, found in Drosophila willistoni (Fruit fly).